A 317-amino-acid chain; its full sequence is Ribosomal protein L11 methyltransferase (317 aa).

S-adenosyl-L-methionine contacts are provided by T169, G190, D211, and N256.

It belongs to the methyltransferase superfamily. PrmA family.

The protein localises to the cytoplasm. The catalysed reaction is L-lysyl-[protein] + 3 S-adenosyl-L-methionine = N(6),N(6),N(6)-trimethyl-L-lysyl-[protein] + 3 S-adenosyl-L-homocysteine + 3 H(+). Its function is as follows. Methylates ribosomal protein L11. This is Ribosomal protein L11 methyltransferase from Helicobacter hepaticus (strain ATCC 51449 / 3B1).